The sequence spans 59 residues: UPF0391 membrane protein GbCGDNIH1_2123 (59 aa).

The next 2 membrane-spanning stretches (helical) occupy residues 6-26 (LALF…TGIS) and 35-55 (ILFV…LAAG).

Belongs to the UPF0391 family.

It is found in the cell membrane. In Granulibacter bethesdensis (strain ATCC BAA-1260 / CGDNIH1), this protein is UPF0391 membrane protein GbCGDNIH1_2123.